The following is a 101-amino-acid chain: Large ribosomal subunit protein uL23 (101 aa).

The protein belongs to the universal ribosomal protein uL23 family. In terms of assembly, part of the 50S ribosomal subunit. Contacts protein L29, and trigger factor when it is bound to the ribosome.

Its function is as follows. One of the early assembly proteins it binds 23S rRNA. One of the proteins that surrounds the polypeptide exit tunnel on the outside of the ribosome. Forms the main docking site for trigger factor binding to the ribosome. This is Large ribosomal subunit protein uL23 from Mannheimia succiniciproducens (strain KCTC 0769BP / MBEL55E).